Consider the following 549-residue polypeptide: MLNQKLNPTPSEDLTIDVDLLYETDPCELKLDEMIEAEPEPEMIEGLPASDALTPADRYLELFEHVQSTKLFPDSKTFPDCAPKMDPLDILIRYRKVRRHRDFDLRRFVENHFWLPETLSSEYVSNPENSLKEHIDQLWPILTREPQDHIPWSSLLALPQSYIVPGGRFSETYYWDSYFTMLGLAESGREDLLKCMADNFAWMIENYGHIPNGNRTYYLSRSQPPVFALMVELFEEDGVRGARRYLDHLKMEYAFWMDGAESLALNQAYRHVVRMPDGSLLNRYWDDRDTPRDESWLEDVETAKHSGRPPNEVYRDLRAGAASGWDYSSRWLRDAGRLASIRTTQFIPIDLNAFLYKLESAIANISALKGERDTEALFRQKASDRRAAVNHYLWDDENGCYRDYDWRREEMALFSAASIVPLYVGMANHEQADRLANVVRSRLLTPGGIMATEYETGEQWDKPNGWAPLQWMAIQGFKLYGDDMLGDEIAHNWLKTVNHFYQEHHKLIEKYHISGGTPREGGGGEYPLQDGFGWTNGVVRRLIGLYGEP.

Residues Arg-168, 175 to 176, Asn-212, 221 to 223, 292 to 294, and Gly-324 each bind substrate; these read WD, RSQ, and RDE. Active-site proton donor/acceptor residues include Asp-326 and Glu-509. Residue Glu-525 participates in substrate binding.

Belongs to the glycosyl hydrolase 37 family. In terms of assembly, monomer.

It is found in the cytoplasm. The catalysed reaction is alpha,alpha-trehalose + H2O = alpha-D-glucose + beta-D-glucose. The protein operates within glycan degradation; trehalose degradation; D-glucose from alpha,alpha-trehalose: step 1/1. In terms of biological role, hydrolyzes trehalose to glucose. Could be involved, in cells returning to low osmolarity conditions, in the utilization of the accumulated cytoplasmic trehalose, which was synthesized in response to high osmolarity. This chain is Cytoplasmic trehalase, found in Salmonella schwarzengrund (strain CVM19633).